The chain runs to 348 residues: Succinylglutamate desuccinylase (348 aa).

H64, E67, and H164 together coordinate Zn(2+). E228 is an active-site residue.

The protein belongs to the AspA/AstE family. Succinylglutamate desuccinylase subfamily. The cofactor is Zn(2+).

The enzyme catalyses N-succinyl-L-glutamate + H2O = L-glutamate + succinate. Its pathway is amino-acid degradation; L-arginine degradation via AST pathway; L-glutamate and succinate from L-arginine: step 5/5. Transforms N(2)-succinylglutamate into succinate and glutamate. This is Succinylglutamate desuccinylase from Shewanella amazonensis (strain ATCC BAA-1098 / SB2B).